Consider the following 932-residue polypeptide: 3-hydroxy-3-methylglutaryl-coenzyme A reductase (932 aa).

Helical transmembrane passes span 20–40, 59–79, 92–112, 113–133, 162–182, and 193–213; these read VIVCTLTLTICMLSMNYFTGL, LSSDVLVMCIMRTLAVAYLYL, ILGIAGLFTIFSSFLFSSAVI, HLFGLELTGLNEALPFFLLLI, MAILGPTITLDTVVTTLVISI, and VFCCFGILSLIANYFVFMTFF. A glycan (N-linked (GlcNAc...) asparagine) is linked at N279. A helical membrane pass occupies residues 322 to 342; the sequence is ILTAILATVLASHYIFFSDLA. Residues 343–467 are linker; the sequence is TYPEKRVSIM…APRPMPELLE (125 aa). Residues 357-367 are compositionally biased toward basic and acidic residues; it reads VVNPGSDHEDA. The segment at 357–442 is disordered; the sequence is VVNPGSDHED…SGSEDEEEEV (86 aa). Over residues 374 to 403 the composition is skewed to polar residues; it reads GTLSSSPSTSDVRVIESMTSRTQACQTDPV. Positions 406–421 are enriched in low complexity; it reads SPRNSRSSSPVSSHSV. Residues 468-932 are catalytic; that stretch reads ILNVGKGPNA…APGTCTANAS (465 aa). Active-site charge relay system residues include E575, K707, and D783. A glycan (N-linked (GlcNAc...) asparagine) is linked at N850. H882 (proton donor) is an active-site residue. An N-linked (GlcNAc...) asparagine glycan is attached at N886. A Phosphoserine; by AMPK modification is found at S888.

This sequence belongs to the HMG-CoA reductase family.

The protein resides in the endoplasmic reticulum membrane. The catalysed reaction is (R)-mevalonate + 2 NADP(+) + CoA = (3S)-3-hydroxy-3-methylglutaryl-CoA + 2 NADPH + 2 H(+). Its pathway is metabolic intermediate biosynthesis; (R)-mevalonate biosynthesis; (R)-mevalonate from acetyl-CoA: step 3/3. Functionally, this transmembrane glycoprotein is involved in the control of cholesterol biosynthesis. It is the rate-limiting enzyme of sterol biosynthesis. The polypeptide is 3-hydroxy-3-methylglutaryl-coenzyme A reductase (HMGCR) (Strongylocentrotus purpuratus (Purple sea urchin)).